A 369-amino-acid chain; its full sequence is tRNA/tmRNA (uracil-C(5))-methyltransferase (369 aa).

Q190, Y218, N223, E239, and D301 together coordinate S-adenosyl-L-methionine. Residue C326 is the Nucleophile of the active site. E360 functions as the Proton acceptor in the catalytic mechanism.

The protein belongs to the class I-like SAM-binding methyltransferase superfamily. RNA M5U methyltransferase family. TrmA subfamily.

It carries out the reaction uridine(54) in tRNA + S-adenosyl-L-methionine = 5-methyluridine(54) in tRNA + S-adenosyl-L-homocysteine + H(+). The catalysed reaction is uridine(341) in tmRNA + S-adenosyl-L-methionine = 5-methyluridine(341) in tmRNA + S-adenosyl-L-homocysteine + H(+). Functionally, dual-specificity methyltransferase that catalyzes the formation of 5-methyluridine at position 54 (m5U54) in all tRNAs, and that of position 341 (m5U341) in tmRNA (transfer-mRNA). The polypeptide is tRNA/tmRNA (uracil-C(5))-methyltransferase (Vibrio vulnificus (strain YJ016)).